We begin with the raw amino-acid sequence, 167 residues long: Large ribosomal subunit protein uL10 (167 aa).

This sequence belongs to the universal ribosomal protein uL10 family. As to quaternary structure, part of the ribosomal stalk of the 50S ribosomal subunit. The N-terminus interacts with L11 and the large rRNA to form the base of the stalk. The C-terminus forms an elongated spine to which L12 dimers bind in a sequential fashion forming a multimeric L10(L12)X complex.

Functionally, forms part of the ribosomal stalk, playing a central role in the interaction of the ribosome with GTP-bound translation factors. The protein is Large ribosomal subunit protein uL10 of Dichelobacter nodosus (strain VCS1703A).